The chain runs to 727 residues: Phosphoribosylformylglycinamidine synthase subunit PurL (727 aa).

Histidine 47 is a catalytic residue. 2 residues coordinate ATP: tyrosine 50 and lysine 89. Residue glutamate 91 participates in Mg(2+) binding. Substrate is bound by residues 92-95 (SHNH) and arginine 114. Catalysis depends on histidine 93, which acts as the Proton acceptor. Aspartate 115 lines the Mg(2+) pocket. Substrate is bound at residue glutamine 238. Aspartate 266 provides a ligand contact to Mg(2+). Residue 310-312 (ESQ) participates in substrate binding. Positions 490 and 527 each coordinate ATP. Asparagine 528 serves as a coordination point for Mg(2+). A substrate-binding site is contributed by serine 530.

The protein belongs to the FGAMS family. As to quaternary structure, monomer. Part of the FGAM synthase complex composed of 1 PurL, 1 PurQ and 2 PurS subunits.

It is found in the cytoplasm. The enzyme catalyses N(2)-formyl-N(1)-(5-phospho-beta-D-ribosyl)glycinamide + L-glutamine + ATP + H2O = 2-formamido-N(1)-(5-O-phospho-beta-D-ribosyl)acetamidine + L-glutamate + ADP + phosphate + H(+). Its pathway is purine metabolism; IMP biosynthesis via de novo pathway; 5-amino-1-(5-phospho-D-ribosyl)imidazole from N(2)-formyl-N(1)-(5-phospho-D-ribosyl)glycinamide: step 1/2. In terms of biological role, part of the phosphoribosylformylglycinamidine synthase complex involved in the purines biosynthetic pathway. Catalyzes the ATP-dependent conversion of formylglycinamide ribonucleotide (FGAR) and glutamine to yield formylglycinamidine ribonucleotide (FGAM) and glutamate. The FGAM synthase complex is composed of three subunits. PurQ produces an ammonia molecule by converting glutamine to glutamate. PurL transfers the ammonia molecule to FGAR to form FGAM in an ATP-dependent manner. PurS interacts with PurQ and PurL and is thought to assist in the transfer of the ammonia molecule from PurQ to PurL. This chain is Phosphoribosylformylglycinamidine synthase subunit PurL, found in Acidiphilium cryptum (strain JF-5).